We begin with the raw amino-acid sequence, 578 residues long: Cholesterol oxidase (578 aa).

Residues Gly-15, Glu-34, Gly-85, Ala-90, and Val-230 each contribute to the FAD site. His-470 serves as the catalytic Proton acceptor. Gly-503 serves as a coordination point for FAD. The disordered stretch occupies residues 529-551 (WPNKGETDRRPPQGEPYRRLAPI). The segment covering 533-546 (GETDRRPPQGEPYR) has biased composition (basic and acidic residues).

Belongs to the GMC oxidoreductase family. Requires FAD as cofactor.

Its subcellular location is the secreted. It catalyses the reaction cholesterol + O2 = cholest-5-en-3-one + H2O2. The catalysed reaction is cholest-5-en-3-one = cholest-4-en-3-one. Its pathway is steroid metabolism; cholesterol degradation. Bifunctional enzyme that catalyzes the oxidation and isomerization of cholesterol to cholestenone (cholest-4-en-3-one), an initial step in the cholesterol degradation process. Contributes to virulence. The sequence is that of Cholesterol oxidase (choD) from Mycobacterium tuberculosis (strain CDC 1551 / Oshkosh).